A 380-amino-acid chain; its full sequence is All-trans-retinol dehydrogenase [NAD(+)] ADH4 (380 aa).

Residue Cys47 coordinates Zn(2+). NAD(+) is bound at residue 48–49 (HT). Residues His69, Cys99, Cys102, Cys105, and Cys113 each contribute to the Zn(2+) site. A Phosphoserine modification is found at Ser121. Cys180 serves as a coordination point for Zn(2+). NAD(+) contacts are provided by residues 205-210 (GLGGVG), Asp229, and Lys234. Ser278 bears the Phosphoserine mark. Residues 298–300 (IGV), 323–325 (TFF), and Arg375 each bind NAD(+).

The protein belongs to the zinc-containing alcohol dehydrogenase family. Class-II subfamily. Homodimer. It depends on Zn(2+) as a cofactor.

It is found in the cytoplasm. It carries out the reaction all-trans-retinol + NAD(+) = all-trans-retinal + NADH + H(+). The enzyme catalyses 9-cis-retinol + NAD(+) = 9-cis-retinal + NADH + H(+). The catalysed reaction is 20-oxo-(5Z,8Z,11Z,14Z)-eicosatetraenoate + NAD(+) + H2O = (5Z,8Z,11Z,14Z)-eicosatetraenedioate + NADH + 2 H(+). It catalyses the reaction 20-hydroxy-(5Z,8Z,11Z,14Z)-eicosatetraenoate + NAD(+) = 20-oxo-(5Z,8Z,11Z,14Z)-eicosatetraenoate + NADH + H(+). It carries out the reaction 1,4-benzoquinone + NADH + H(+) = hydroquinone + NAD(+). With respect to regulation, oxydation of 20-HETE is inhibited by low concentrations of N-heptylformamide. Oxydation of 20-HETE is a decreased by 55-65% by either all-trans-retinol or all-trans-retinoic acid. Strongly inhibited by omega-hydroxy fatty acids. Its function is as follows. Catalyzes the NAD-dependent oxidation of either all-trans-retinol or 9-cis-retinol. Also oxidizes long chain omega-hydroxy fatty acids, such as 20-HETE, producing both the intermediate aldehyde, 20-oxoarachidonate and the end product, a dicarboxylic acid, (5Z,8Z,11Z,14Z)-eicosatetraenedioate. Also catalyzes the reduction of benzoquinones. The sequence is that of All-trans-retinol dehydrogenase [NAD(+)] ADH4 from Homo sapiens (Human).